Reading from the N-terminus, the 30-residue chain is Chassatide C3 (30 aa).

The cyclopeptide (Gly-Asn) cross-link spans Gly1 to Asn30. Disulfide bonds link Cys4–Cys20, Cys8–Cys22, and Cys13–Cys27.

In terms of processing, this is a cyclic peptide. In terms of tissue distribution, expressed in fruit, pedicel, stem and root but not in leaf (at protein level).

Probably participates in a plant defense mechanism. The sequence is that of Chassatide C3 from Chassalia chartacea (Chassalia curviflora).